Consider the following 647-residue polypeptide: MIKITFPDGAIREFESGITTFEIAQSISNSLAKKALAGKFNGQLIDTTRAIEEDGSIEIVTPDHEDALGVLRHSAAHLFAQAAKRLFPDLCLGVGPAIQDGFYYDTDNKSGQISNDDLPRVEEEMKKIVKENHPCIREEISKEEALELFKDDPYKVELISEHAEDGLTVYRQGEFVDLCRGPHVPSTGRIQVFHLLNVAGAYWRGNSDNAMMQRVYGTAWFDKKDLKAYLKRREEAKERDHRKLGKELDLFMVNPEVGQGLPFWLPNGATIRRELERYIVDKEIASGYQHVYTPPMASVEFYKTSGHWDHYREDMFPTMDMGDGEEFVLRPMNCPHHIEVYKHHVHSYRELPIRIAELGMMHRYEKSGALTGLQRVREMTLNDAHIFVTPEQIKDEFLKALNLIAEIYEDFNLTDYRFRLSYRDPEDKHKYYDNDEMWENAQAMLKEAMDDFGLDYFEAEGEAAFYGPKLDIQVKTALGNEETLSTIQLDFLLPERFDLKYIGADGEEHRPIMIHRGGISTMERFTAILIETYKGAFPTWLAPQQVSVIPISNEAHIDYAWEVARVLKDRGIRAEVDDRNEKMQYKIRAAQTQKIPYQLIVGDKEMEEKAVNVRRYGSKATETKSIEEFVESILADIARKSRPDEVK.

The 61-residue stretch at 1 to 61 (MIKITFPDGA…EEDGSIEIVT (61 aa)) folds into the TGS domain. Positions 240–538 (DHRKLGKELD…LIETYKGAFP (299 aa)) are catalytic. Residues Cys334, His385, and His515 each coordinate Zn(2+).

It belongs to the class-II aminoacyl-tRNA synthetase family. Homodimer. Requires Zn(2+) as cofactor.

It localises to the cytoplasm. The catalysed reaction is tRNA(Thr) + L-threonine + ATP = L-threonyl-tRNA(Thr) + AMP + diphosphate + H(+). In terms of biological role, catalyzes the attachment of threonine to tRNA(Thr) in a two-step reaction: L-threonine is first activated by ATP to form Thr-AMP and then transferred to the acceptor end of tRNA(Thr). Also edits incorrectly charged L-seryl-tRNA(Thr). The protein is Threonine--tRNA ligase of Streptococcus agalactiae serotype III (strain NEM316).